Here is a 64-residue protein sequence, read N- to C-terminus: Large ribosomal subunit protein bL35 (64 aa).

Belongs to the bacterial ribosomal protein bL35 family.

This chain is Large ribosomal subunit protein bL35, found in Vibrio metschnikovii.